A 955-amino-acid polypeptide reads, in one-letter code: Kinesin-like protein KIN-14L (955 aa).

The 122-residue stretch at 19–140 (AARRFQAVQW…CILGLKAYHE (122 aa)) folds into the Calponin-homology (CH) domain. The Kinesin motor domain occupies 363–685 (NIRVYCRVRP…LKFAQRVSTV (323 aa)). 445–452 (GQTGSGKT) serves as a coordination point for ATP. Residues 692–719 (AHKETREVMHLKEQIENLKRALGTEEWN) adopt a coiled-coil conformation. The interval 878 to 942 (RKENIPADPR…GKPIENGKKD (65 aa)) is disordered. Residues 894–916 (NNFSHIKSPDTSNAKTMRRQSLT) show a composition bias toward polar residues.

The protein belongs to the TRAFAC class myosin-kinesin ATPase superfamily. Kinesin family. KIN-14 subfamily.

This Arabidopsis thaliana (Mouse-ear cress) protein is Kinesin-like protein KIN-14L.